The chain runs to 180 residues: Progesterone receptor (180 aa).

The NR C4-type zinc-finger motif lies at 1–11 (KNCPACRLRKC). A DNA-binding region (nuclear receptor) is located at residues 1-16 (KNCPACRLRKCCQAGM). S60 is modified (phosphoserine). The 118-residue stretch at 63–180 (QEIQLFPPLI…QRMKESSFYS (118 aa)) folds into the NR LBD domain. Residues 71–180 (LINLLLSIEP…QRMKESSFYS (110 aa)) form an AF2; mediates transcriptional activation region. R150 provides a ligand contact to progesterone.

Belongs to the nuclear hormone receptor family. NR3 subfamily. In terms of assembly, interacts with SMARD1 and UNC45A. Interacts with CUEDC2; the interaction promotes ubiquitination, decreases sumoylation, and represses transcriptional activity. Interacts with PIAS3; the interaction promotes sumoylation of PR in a hormone-dependent manner, inhibits DNA-binding, and alters nuclear export. Interacts with SP1; the interaction requires ligand-induced phosphorylation by ERK1/2-MAPK. Interacts with PRMT2. Interacts with NCOA2 and NCOA1. Interacts with KLF9. Interacts with GTF2B. Post-translationally, phosphorylated on multiple serine sites. Several of these sites are hormone-dependent. Sumoylation is hormone-dependent and represses transcriptional activity. Sumoylation on all three sites is enhanced by PIAS3. Desumoylated by SENP1. Sumoylation is repressed by ubiquitination and modulated by phosphorylation. In terms of processing, ubiquitination is hormone-dependent and represses sumoylation. Post-translationally, palmitoylated by ZDHHC7 and ZDHHC21. Palmitoylation is required for plasma membrane targeting and for rapid intracellular signaling via ERK and AKT kinases and cAMP generation.

The protein localises to the nucleus. Its subcellular location is the cytoplasm. Its function is as follows. The steroid hormones and their receptors are involved in the regulation of eukaryotic gene expression and affect cellular proliferation and differentiation in target tissues. Transcriptional activator of several progesteron-dependent promoters in a variety of cell types. Involved in activation of SRC-dependent MAPK signaling on hormone stimulation. The protein is Progesterone receptor (PGR) of Notamacropus eugenii (Tammar wallaby).